Consider the following 678-residue polypeptide: Ribonuclease Z 2, mitochondrial (678 aa).

A mitochondrion-targeting transit peptide spans 1 to 37 (MKASLLVPRRALLFGQLLPPKYSWYSVKRWQSQLTFR).

It belongs to the RNase Z family. Requires Zn(2+) as cofactor.

The protein localises to the mitochondrion. The protein resides in the cytoplasm. The enzyme catalyses Endonucleolytic cleavage of RNA, removing extra 3' nucleotides from tRNA precursor, generating 3' termini of tRNAs. A 3'-hydroxy group is left at the tRNA terminus and a 5'-phosphoryl group is left at the trailer molecule.. Its function is as follows. Zinc phosphodiesterase, which displays some tRNA 3'-processing endonuclease activity. May be involved in tRNA maturation, by removing a 3'-trailer from precursor tRNA. The sequence is that of Ribonuclease Z 2, mitochondrial (trz2) from Schizosaccharomyces pombe (strain 972 / ATCC 24843) (Fission yeast).